The following is a 329-amino-acid chain: Elongation factor Ts (329 aa).

The segment at 79–82 is involved in Mg(2+) ion dislocation from EF-Tu; it reads TDFV.

It belongs to the EF-Ts family.

It localises to the cytoplasm. In terms of biological role, associates with the EF-Tu.GDP complex and induces the exchange of GDP to GTP. It remains bound to the aminoacyl-tRNA.EF-Tu.GTP complex up to the GTP hydrolysis stage on the ribosome. In Phocaeicola vulgatus (strain ATCC 8482 / DSM 1447 / JCM 5826 / CCUG 4940 / NBRC 14291 / NCTC 11154) (Bacteroides vulgatus), this protein is Elongation factor Ts.